The sequence spans 335 residues: Fimbrial adhesin PapGI (335 aa).

Positions 1–21 (MKKWFPAFLFLSLSGGNDALA) are cleaved as a signal peptide.

This sequence belongs to the adhesin PapG family. As to quaternary structure, interacts with chaperone PapD. Assembly of the P pilus requires periplasmic chaperone PapD, in absence of the chaperone overexpression of this subunit is toxic, where the protein accumulates in the periplasm. PapD stimulates release of PapG from an inner membrane-associated form (where at least 1 disulfide bond can form) into the periplasm and also helps it achieve its correct digalactoside-binding conformation. Post-translationally, contains disulfide bonds.

It is found in the secreted. The protein localises to the fimbrium. Functionally, tip adhesin component of type P pili that binds preferentially to host cell glycosphingolipids such as globotriaosylceramide. The polypeptide is Fimbrial adhesin PapGI (Escherichia coli).